A 336-amino-acid polypeptide reads, in one-letter code: Acyl-CoA-binding domain-containing protein 4 (336 aa).

Residues 12–32 (AVIGLLFAFLVAKLISTVIAF) traverse the membrane as a helical; Signal-anchor segment. A disordered region spans residues 40–88 (TRSTPTSPSAADTPAAPAPPPASLDGGHGDTSDGSGSDSDSDWEGVEST). Over residues 42–54 (STPTSPSAADTPA) the composition is skewed to low complexity. Residues 78 to 88 (SDSDWEGVEST) show a composition bias toward acidic residues. The ACB domain maps to 90-178 (LDEEFSAASA…VDELFPNWSM (89 aa)). An acyl-CoA-binding positions include 120–124 (YGLYK), Lys142, Lys146, and Tyr165. Residue Asn175 is glycosylated (N-linked (GlcNAc...) asparagine). A disordered region spans residues 179 to 202 (GSSTKRKDEDTTVSASSSKGPMGP). Asn216 carries N-linked (GlcNAc...) asparagine glycosylation. ANK repeat units follow at residues 251 to 280 (EGRTPLHWAVDRGHLNSVEILVNANADVNA) and 284 to 313 (EGQTALHYAVLCEREDIAELLVKHHADVQI).

It belongs to the ACBP family. Highly expressed in leaves. Expressed at low levels in roots and seeds.

Its subcellular location is the endoplasmic reticulum membrane. In terms of biological role, binds medium- and long-chain acyl-CoA esters with high affinity. Can interact in vitro with palmitoyl-CoA, linoleoyl-CoA and linolenoyl-CoA. Binds phosphatidic acid (PA) and phosphatidylcholine (PC) in vitro. May play a role in the biosynthesis of phospholipids. This Oryza sativa subsp. japonica (Rice) protein is Acyl-CoA-binding domain-containing protein 4.